Here is a 115-residue protein sequence, read N- to C-terminus: MKLSLIIIATSLVIAVVAFPSKDSAATDFDKTESLENVEERVETALDERPRACSKNPGESCTNNCECCGATVVCASVYVAGVEKKSCKSKTSDNGFLNIIGQAANAVQNAASLCV.

An N-terminal signal peptide occupies residues 1–18; it reads MKLSLIIIATSLVIAVVA. Residues 19–51 constitute a propeptide that is removed on maturation; the sequence is FPSKDSAATDFDKTESLENVEERVETALDERPR.

Belongs to the neurotoxin 25 family. F7 subfamily. Post-translationally, contains 4 disulfide bonds. In terms of tissue distribution, expressed by the venom gland.

It localises to the secreted. This chain is Toxin-like structure LSTX-R1, found in Lycosa singoriensis (Wolf spider).